A 212-amino-acid chain; its full sequence is ECF RNA polymerase sigma factor SigD (212 aa).

The interval 49–119 (ETIRPIVVRY…VADAHRAAGR (71 aa)) is sigma-70 factor domain-2. The short motif at 75–78 (DVAQ) is the Polymerase core binding element. A sigma-70 factor domain-4 region spans residues 152–201 (NELLEILPAKQREILILRVVVGLSAEETAAAVGSTTGAVRVAQHRALQRL). Positions 176–195 (AEETAAAVGSTTGAVRVAQH) form a DNA-binding region, H-T-H motif.

The protein belongs to the sigma-70 factor family. ECF subfamily. As to quaternary structure, interacts transiently with the RNA polymerase catalytic core formed by RpoA, RpoB, RpoC and RpoZ (2 alpha, 1 beta, 1 beta' and 1 omega subunit) to form the RNA polymerase holoenzyme that can initiate transcription. Interacts (via sigma-70 factor domain 4) with RsdA.

In terms of biological role, sigma factors are initiation factors that promote the attachment of RNA polymerase to specific initiation sites and are then released. Extracytoplasmic function (ECF) sigma factors are held in an inactive form by an anti-sigma factor until released by regulated intramembrane proteolysis. This chain is ECF RNA polymerase sigma factor SigD (sigD), found in Mycobacterium bovis (strain ATCC BAA-935 / AF2122/97).